The primary structure comprises 220 residues: Charged multivesicular body protein 2a (220 aa).

Coiled-coil stretches lie at residues 12–53 and 199–220; these read EEML…MAKQ and PSAALADADADLEERLNNLRRD. The disordered stretch occupies residues 179 to 208; sequence LSNLPSTGGSLSVAGAKKGEPSAALADADA. An MIT-interacting motif motif is present at residues 208-218; the sequence is ADLEERLNNLR.

The protein belongs to the SNF7 family. As to quaternary structure, probable core component of the endosomal sorting required for transport complex III (ESCRT-III). ESCRT-III components are thought to multimerize to form a flat lattice on the perimeter membrane of the endosome.

It is found in the late endosome membrane. The protein resides in the cytoplasm. Its function is as follows. Probable core component of the endosomal sorting required for transport complex III (ESCRT-III) which is involved in multivesicular bodies (MVBs) formation and sorting of endosomal cargo proteins into MVBs. MVBs contain intraluminal vesicles (ILVs) that are generated by invagination and scission from the limiting membrane of the endosome and mostly are delivered to lysosomes enabling degradation of membrane proteins, such as stimulated growth factor receptors, lysosomal enzymes and lipids. This is Charged multivesicular body protein 2a (chmp2a) from Xenopus tropicalis (Western clawed frog).